Consider the following 537-residue polypeptide: ESX-2 secretion system protein EccE2 (537 aa).

The helical transmembrane segment at 31–51 threads the bilayer; it reads ALGGQLGAVMAVVVGVALVFV.

Belongs to the EccE family. As to quaternary structure, could be part of the ESX-2 / type VII secretion system (T7SS), which is composed of cytosolic and membrane components.

The protein localises to the cell membrane. This Mycobacterium tuberculosis (strain CDC 1551 / Oshkosh) protein is ESX-2 secretion system protein EccE2 (eccE2).